A 147-amino-acid chain; its full sequence is MATNTMLCLFVISVVLALAFATNKKGDEEPENHSTGIFGKVGRVVTVALAMSSRLGGADATRGGGAVYGGNLKSNQLPNNNWMAPPPPMAIRSAKVYDSKHSPAEYLKKFAQDFRRKTGMHSQRHHEETTLEQEKRVAGAGPDPIHH.

The first 21 residues, 1–21 (MATNTMLCLFVISVVLALAFA), serve as a signal peptide directing secretion. The required for secretion from the host cytoplasm to the host apoplasm stretch occupies residues 21–83 (ATNKKGDEEP…SNQLPNNNWM (63 aa)). Asn32 is a glycosylation site (N-linked (GlcNAc...) asparagine). Disordered regions lie at residues 57-86 (GADATRGGGAVYGGNLKSNQLPNNNWMAPP) and 116-147 (RKTGMHSQRHHEETTLEQEKRVAGAGPDPIHH). Basic and acidic residues predominate over residues 125 to 137 (HHEETTLEQEKRV). Residues 136 to 147 (RVAGAGPDPIHH) carry the CLE motif.

This sequence belongs to the CLV3/ESR signal peptide family. As to expression, highly expressed exclusively within the dorsal esophageal gland cell during syncytium formation in host plants.

The protein resides in the secreted. The protein localises to the host cytoplasm. It is found in the host extracellular space. It localises to the extracellular space. Its subcellular location is the apoplast. Its function is as follows. Mimics host plant CLE extracellular signal peptides that regulate cell fate. May play a role in the differentiation or division of feeding cells (syncytia) induced in plant roots during infection. The polypeptide is CLAVATA3/ESR (CLE)-related protein 4C (CLE-4C) (Globodera rostochiensis (Golden nematode worm)).